The primary structure comprises 178 residues: Methylmalonyl-CoA epimerase, mitochondrial (178 aa).

The transit peptide at 1-38 (MRRVVKAAALAAGATGLFSRVQTSVAIGRSFSTPQSQF) directs the protein to the mitochondrion. In terms of domain architecture, VOC spans 49–178 (RLNHVAVAVP…GGVLVELEQA (130 aa)). A Co(2+)-binding site is contributed by His52. An N6-succinyllysine modification is found at Lys116. His124 provides a ligand contact to Co(2+). N6-acetyllysine; alternate is present on Lys152. Lys152 is modified (N6-succinyllysine; alternate). Glu174 serves as a coordination point for Co(2+).

This sequence belongs to the methylmalonyl-CoA epimerase family.

It is found in the mitochondrion. The enzyme catalyses (R)-methylmalonyl-CoA = (S)-methylmalonyl-CoA. Methylmalonyl-CoA epimerase involved in propionyl-CoA metabolism. This Mus musculus (Mouse) protein is Methylmalonyl-CoA epimerase, mitochondrial.